A 202-amino-acid polypeptide reads, in one-letter code: Nucleoside triphosphate pyrophosphatase (202 aa).

D79 functions as the Proton acceptor in the catalytic mechanism.

The protein belongs to the Maf family. A divalent metal cation serves as cofactor.

The protein localises to the cytoplasm. The catalysed reaction is a ribonucleoside 5'-triphosphate + H2O = a ribonucleoside 5'-phosphate + diphosphate + H(+). It catalyses the reaction a 2'-deoxyribonucleoside 5'-triphosphate + H2O = a 2'-deoxyribonucleoside 5'-phosphate + diphosphate + H(+). Functionally, nucleoside triphosphate pyrophosphatase. May have a dual role in cell division arrest and in preventing the incorporation of modified nucleotides into cellular nucleic acids. The protein is Nucleoside triphosphate pyrophosphatase of Nitrobacter winogradskyi (strain ATCC 25391 / DSM 10237 / CIP 104748 / NCIMB 11846 / Nb-255).